Reading from the N-terminus, the 34-residue chain is Mu-theraphotoxin-CCy1a (34 aa).

3 disulfide bridges follow: Cys-3-Cys-18, Cys-10-Cys-23, and Cys-17-Cys-30.

It belongs to the neurotoxin 10 (Hwtx-1) family. 14 (Hntx-1) subfamily. Expressed by the venom gland.

Its subcellular location is the secreted. Voltage-gated sodium channel Nav1.7/SCN9A inhibitor. The chain is Mu-theraphotoxin-CCy1a from Chromatopelma cyaneopubescens (Greenbottle blue tarantula).